Reading from the N-terminus, the 670-residue chain is tRNA 5-methylaminomethyl-2-thiouridine biosynthesis bifunctional protein MnmC (670 aa).

A tRNA (mnm(5)s(2)U34)-methyltransferase region spans residues 1 to 242 (MTFSVQHAEI…KRECLSGLKI (242 aa)). Residues 269 to 670 (IGGGIASLCA…KKWLKGSKVE (402 aa)) form an FAD-dependent cmnm(5)s(2)U34 oxidoreductase region.

In the N-terminal section; belongs to the methyltransferase superfamily. tRNA (mnm(5)s(2)U34)-methyltransferase family. This sequence in the C-terminal section; belongs to the DAO family. FAD is required as a cofactor.

It localises to the cytoplasm. The catalysed reaction is 5-aminomethyl-2-thiouridine(34) in tRNA + S-adenosyl-L-methionine = 5-methylaminomethyl-2-thiouridine(34) in tRNA + S-adenosyl-L-homocysteine + H(+). Functionally, catalyzes the last two steps in the biosynthesis of 5-methylaminomethyl-2-thiouridine (mnm(5)s(2)U) at the wobble position (U34) in tRNA. Catalyzes the FAD-dependent demodification of cmnm(5)s(2)U34 to nm(5)s(2)U34, followed by the transfer of a methyl group from S-adenosyl-L-methionine to nm(5)s(2)U34, to form mnm(5)s(2)U34. This Haemophilus influenzae (strain ATCC 51907 / DSM 11121 / KW20 / Rd) protein is tRNA 5-methylaminomethyl-2-thiouridine biosynthesis bifunctional protein MnmC.